The following is a 381-amino-acid chain: Succinyl-diaminopimelate desuccinylase (381 aa).

H76 is a Zn(2+) binding site. D78 is a catalytic residue. A Zn(2+)-binding site is contributed by D107. Residue E140 is the Proton acceptor of the active site. 3 residues coordinate Zn(2+): E141, E169, and H354.

This sequence belongs to the peptidase M20A family. DapE subfamily. As to quaternary structure, homodimer. It depends on Zn(2+) as a cofactor. The cofactor is Co(2+).

It catalyses the reaction N-succinyl-(2S,6S)-2,6-diaminopimelate + H2O = (2S,6S)-2,6-diaminopimelate + succinate. The protein operates within amino-acid biosynthesis; L-lysine biosynthesis via DAP pathway; LL-2,6-diaminopimelate from (S)-tetrahydrodipicolinate (succinylase route): step 3/3. In terms of biological role, catalyzes the hydrolysis of N-succinyl-L,L-diaminopimelic acid (SDAP), forming succinate and LL-2,6-diaminopimelate (DAP), an intermediate involved in the bacterial biosynthesis of lysine and meso-diaminopimelic acid, an essential component of bacterial cell walls. In Gluconobacter oxydans (strain 621H) (Gluconobacter suboxydans), this protein is Succinyl-diaminopimelate desuccinylase.